The following is a 1174-amino-acid chain: Protein kinase C-like (1174 aa).

Positions M1–T68 constitute an REM-1 1 domain. Over residues S69–N84 the composition is skewed to polar residues. The interval S69–P140 is disordered. The segment covering G96–P123 has biased composition (low complexity). Pro residues predominate over residues P124–A134. An REM-1 2 domain is found at K149 to D226. Residues G229–L349 form the C2 domain. The segment at D358–I406 is disordered. The span at P380 to T389 shows a compositional bias: gly residues. 2 consecutive Phorbol-ester/DAG-type zinc fingers follow at residues G458–C506 and P526–C576. Positions T593–K842 are disordered. A compositionally biased stretch (polar residues) spans G596 to P611. The segment covering Q624–Q636 has biased composition (low complexity). Residues S648–P657 are compositionally biased toward pro residues. Positions S658–A709 are enriched in low complexity. The span at R720–S744 shows a compositional bias: polar residues. Positions L786 to P802 are enriched in pro residues. Residues K808 to P820 show a composition bias toward polar residues. The Protein kinase domain occupies F849–F1108. ATP is bound by residues L855–V863 and K878. The Proton acceptor role is filled by D974. One can recognise an AGC-kinase C-terminal domain in the interval R1109 to A1174.

It belongs to the protein kinase superfamily. AGC Ser/Thr protein kinase family. PKC subfamily.

It carries out the reaction L-seryl-[protein] + ATP = O-phospho-L-seryl-[protein] + ADP + H(+). The catalysed reaction is L-threonyl-[protein] + ATP = O-phospho-L-threonyl-[protein] + ADP + H(+). The sequence is that of Protein kinase C-like (PKC1) from Cochliobolus heterostrophus (Southern corn leaf blight fungus).